The following is a 37-amino-acid chain: Kappa-actitoxin-Bcs3b (37 aa).

A ShKT domain is found at 2–37 (CKDGFPTATCQHAKLVGNCKNSQKYRANCAKTCGPC). 3 disulfide bridges follow: C2–C37, C11–C30, and C20–C34. Positions 25 to 26 (KY) are crucial for binding to potassium channels.

The protein belongs to the sea anemone type 1 potassium channel toxin family. Type 1b subfamily.

The protein localises to the secreted. The protein resides in the nematocyst. Functionally, inhibits voltage-gated potassium channels (IC(50)=14.42 nM for rKCNA1/Kv1.1, IC(50)=80.4 nM for rKCNA2/Kv1.2, IC(50)=7.76 nM for rKCNA6/Kv1.6, IC(50)=13.12 nM for hKCNA3/Kv1.3, and IC(50)=49.14 nM for insect Shaker IR). Binds the Shaker IR channels in a voltage-independent manner. This Bunodosoma caissarum (Sea anemone) protein is Kappa-actitoxin-Bcs3b.